Reading from the N-terminus, the 2554-residue chain is Highly reducing polyketide synthase PKS6 (2554 aa).

The interval 1 to 48 is disordered; sequence MGSLSAVPATNGNHAALNGSASTNGQHVNGSTHVNGNHSLNGSAQVNG. Over residues 8–48 the composition is skewed to polar residues; sequence PATNGNHAALNGSASTNGQHVNGSTHVNGNHSLNGSAQVNG. The region spanning 56-481 is the Ketosynthase family 3 (KS3) domain; that stretch reads LEPIAVVGMS…GTNAHVVVDA (426 aa). Active-site for beta-ketoacyl synthase activity residues include C230, H367, and H407. The interval 595 to 913 is malonyl-CoA:ACP transacylase (MAT) domain; it reads VFSGQGAQYP…HYTGSLKRGE (319 aa). Positions 981–1119 are N-terminal hotdog fold; the sequence is HELLGTLVHD…GLVQVILKSE (139 aa). A dehydratase (DH) domain region spans residues 981 to 1281; the sequence is HELLGTLVHD…QAWGVVATKL (301 aa). One can recognise a PKS/mFAS DH domain in the interval 981 to 1287; it reads HELLGTLVHD…ATKLPDVSIG (307 aa). Catalysis depends on H1013, which acts as the Proton acceptor; for dehydratase activity. The tract at residues 1137 to 1287 is C-terminal hotdog fold; the sequence is AQHIPANQFY…ATKLPDVSIG (151 aa). D1200 (proton donor; for dehydratase activity) is an active-site residue. The segment at 1451-1556 is methyltransferase (CMet) domain; it reads VEVGAGTGSA…KTMLRPGGKL (106 aa). The segment at 1840 to 2153 is enoyl reductase (ER) domain; the sequence is GVLDTIRWVD…AGKHTGKVIL (314 aa). The segment at 2177–2353 is ketoreductase (KR) domain; it reads ATYLVVGGLG…TAYAVNIGAI (177 aa). The region spanning 2457–2534 is the Carrier domain; that stretch reads EAQDIICDAI…ELAEIVTKGS (78 aa). S2494 is subject to O-(pantetheine 4'-phosphoryl)serine.

Its pathway is secondary metabolite biosynthesis. Highly reducing polyketide synthase; part of the gene cluster that mediates the biosynthesis of the lipopeptide fusaristatin A. Fusaristatin A consists of a polyketide chain linked to three amino acid residues glutamine (Gln), dehydroalanine (dehydro-Ala), and beta-aminoisobutyric acid. The biosynthesis starts with formation of a linear polyketide chain by the highly reducing polyketide synthase PKS6. The gene cluster does not contain an acyl-CoA ligase or an acyl-transferase, and it is therefore predicted that the polyketide is transferred directly to the nonribosomal peptide synthetase NRPS7. Modules 1-3 from NRPS7 incorporate dehydro-Ala, Gln, and beta-aminoisobutyric acid in the compound, which is released by cyclization. The beta-aminoisobutyric acid units are most likely not freely available to the NRPS, but can be synthesized from thymine, which requires a dehydrogenase, a monooxygenase, and an aminotransferase. The fusaristatin A cluster contains a cytochrome P450 monooxygenase (FGSG_08207) and an aminotransferase (FGSG_17085), which theoretically can perform two of the enzymatic steps. The enzymes may however also be involved in biosynthesis of dehydroalanine or modification of the polyketide. The dehydro-Ala residue can be a result of cyclization, where serine is dehydrated. The last gene of the cluster encodes a protein with an A/B barrel domain found in variable enzymes, which hampers functional prediction. This is Highly reducing polyketide synthase PKS6 from Gibberella zeae (strain ATCC MYA-4620 / CBS 123657 / FGSC 9075 / NRRL 31084 / PH-1) (Wheat head blight fungus).